The primary structure comprises 819 residues: Leucine--tRNA ligase (819 aa).

Residues 51–61 carry the 'HIGH' region motif; the sequence is PYPSGNLHIGH. The 'KMSKS' region motif lies at 586–590; the sequence is KMSKS. Residue Lys589 participates in ATP binding.

The protein belongs to the class-I aminoacyl-tRNA synthetase family.

Its subcellular location is the cytoplasm. It carries out the reaction tRNA(Leu) + L-leucine + ATP = L-leucyl-tRNA(Leu) + AMP + diphosphate. The polypeptide is Leucine--tRNA ligase (Deinococcus geothermalis (strain DSM 11300 / CIP 105573 / AG-3a)).